Consider the following 100-residue polypeptide: Cytochrome c2 iso-1 (100 aa).

Heme c-binding residues include Cys-11, Cys-14, His-15, and Met-76.

This sequence belongs to the cytochrome c family. Post-translationally, binds 1 heme c group covalently per subunit.

Functionally, cytochrome c2 is found mainly in purple, non-sulfur, photosynthetic bacteria where it functions as the electron donor to the oxidized bacteriochlorophyll in the photophosphorylation pathway. However, it may also have a role in the respiratory chain and is found in some non-photosynthetic bacteria. This is Cytochrome c2 iso-1 from Magnetospirillum molischianum (Rhodospirillum molischianum).